A 1514-amino-acid chain; its full sequence is ABC transporter C family member 3 (1514 aa).

The next 10 helical transmembrane spans lie at 35–55, 83–103, 116–136, 153–173, 183–203, 325–345, 364–386, 439–459, 463–483, and 551–571; these read PLFL…VLFF, ALFC…LSGF, LVSS…SICL, LWLV…FVMY, LLVF…VAVL, ILVT…GPAL, YVLV…HWFF, WYMH…WILY, GLAS…NFPF, and FVFW…CILL. Positions 325–606 constitute an ABC transmembrane type-1 1 domain; that stretch reads ILVTAFFAFI…LPDTISMIVQ (282 aa). One can recognise an ABC transporter 1 domain in the interval 640-863; it reads VEVINSTLSW…GTDFMELIGA (224 aa). 675-682 contacts ATP; sequence GTVGSGKS. Transmembrane regions (helical) follow at residues 940-960, 987-1007, 1077-1097, 1181-1201, and 1205-1225; these read YITL…QVLF, LSTL…CILL, IGII…FIPV, LSSL…TGVI, and LAGL…WLIW. Residues 950 to 1232 enclose the ABC transmembrane type-1 2 domain; sequence VPFILLGQVL…LIWTLCNLEN (283 aa). Positions 1271-1503 constitute an ABC transporter 2 domain; that stretch reads IRDLQVRYAP…KSSSFSKLVA (233 aa). Residue 1303–1310 participates in ATP binding; the sequence is GRTGSGKS.

Belongs to the ABC transporter superfamily. ABCC family. Conjugate transporter (TC 3.A.1.208) subfamily. In terms of tissue distribution, ubiquitous.

It localises to the membrane. The catalysed reaction is ATP + H2O + xenobioticSide 1 = ADP + phosphate + xenobioticSide 2.. Its activity is regulated as follows. Glutathione-conjugate transport is inhibited by decyl-glutathione and, to a lower extent, by GS-GS, but not by GSH. All transports are inhibited by vanadate. Its function is as follows. Pump for glutathione S-conjugates. Mediates the transport of glutathione conjugates such as chlorodinitrobenzene-GS (DNB-GS), and of chlorophyll catabolites such as Bn-NCC-1. Also transports heavy metals such as cadmium (Cd). This Arabidopsis thaliana (Mouse-ear cress) protein is ABC transporter C family member 3 (ABCC3).